The chain runs to 155 residues: Small ribosomal subunit protein uS9 (155 aa).

It belongs to the universal ribosomal protein uS9 family.

The sequence is that of Small ribosomal subunit protein uS9 from Rhizobium etli (strain ATCC 51251 / DSM 11541 / JCM 21823 / NBRC 15573 / CFN 42).